The sequence spans 387 residues: 17-beta-hydroxysteroid dehydrogenase type 2 (387 aa).

A helical; Signal-anchor for type II membrane protein membrane pass occupies residues 4–24; that stretch reads FFSDTAWICLAVPTVLCGTVF. 82–111 provides a ligand contact to NAD(+); it reads QKAVLVTGGDCGLGHALCKYLDELGFTVFA. S219 contacts substrate. Y232 is a catalytic residue.

This sequence belongs to the short-chain dehydrogenases/reductases (SDR) family. As to quaternary structure, homodimer. As to expression, expressed in placenta.

It localises to the endoplasmic reticulum membrane. It carries out the reaction 17beta-estradiol + NAD(+) = estrone + NADH + H(+). The catalysed reaction is testosterone + NAD(+) = androst-4-ene-3,17-dione + NADH + H(+). It catalyses the reaction 17beta-hydroxy-5alpha-androstan-3-one + NAD(+) = 5alpha-androstan-3,17-dione + NADH + H(+). The enzyme catalyses (20S)-hydroxypregn-4-en-3-one + NAD(+) = progesterone + NADH + H(+). Functionally, catalyzes the NAD-dependent oxidation of the highly active 17beta-hydroxysteroids, such as estradiol (E2), testosterone (T), and dihydrotestosterone (DHT), to their less active forms and thus regulates the biological potency of these steroids. Oxidizes estradiol to estrone, testosterone to androstenedione, and dihydrotestosterone to 5alpha-androstan-3,17-dione. Also has 20-alpha-HSD activity. This chain is 17-beta-hydroxysteroid dehydrogenase type 2, found in Homo sapiens (Human).